Reading from the N-terminus, the 365-residue chain is Cobalt-precorrin-5B C(1)-methyltransferase (365 aa).

This sequence belongs to the CbiD family.

The enzyme catalyses Co-precorrin-5B + S-adenosyl-L-methionine = Co-precorrin-6A + S-adenosyl-L-homocysteine. It participates in cofactor biosynthesis; adenosylcobalamin biosynthesis; cob(II)yrinate a,c-diamide from sirohydrochlorin (anaerobic route): step 6/10. Catalyzes the methylation of C-1 in cobalt-precorrin-5B to form cobalt-precorrin-6A. The polypeptide is Cobalt-precorrin-5B C(1)-methyltransferase (Clostridium perfringens (strain 13 / Type A)).